The following is a 519-amino-acid chain: MTEQDAAIVVKPGTVSLDDLARVLAGQPVVLDPSFWPRVEAAAAIVAKAAQADTPVYGINTGFGKLASKRIPPDQTALLQRNLIVSHCCGVGPATPEPIVRLMMALKIISLGRGASGVRREVIEQLQGMLARRVCPLVPQQGSVGASGDLAPLAHMTAVMIGEGQAIVDGKTVSGGEALAAAGLAPLTLGPKEGLALINGTQFSTAYAISGVLRGFHLARAALVTGALSVDAAMASTAPFRPEIQALRGHAGQIAAAATLTALLDGSDIRLSHLEGDERVQDPYCLRCQPQVAGAALDLITQTARALIVEANAVTDNPLVLVETGEIVSGGNFHAEPVAFAADTIALALSEIGAISERRIATLVDPALNFGLPPFLTPDPGVNSGFMIAEVTAAALYAENKQRAAACSIDSTPTSANQEDHVSMAAHAARRLADMADNLAAILGIELLVAAQGITLRAPHATSAPLVAVIAALREQVPALGADRYMAGDLAKAAALVEADALPAAAIGVLPSDPFPRLA.

Residues 146 to 148 constitute a cross-link (5-imidazolinone (Ala-Gly)); that stretch reads ASG. Ser-147 carries the post-translational modification 2,3-didehydroalanine (Ser).

It belongs to the PAL/histidase family. Post-translationally, contains an active site 4-methylidene-imidazol-5-one (MIO), which is formed autocatalytically by cyclization and dehydration of residues Ala-Ser-Gly.

It is found in the cytoplasm. The catalysed reaction is L-histidine = trans-urocanate + NH4(+). It participates in amino-acid degradation; L-histidine degradation into L-glutamate; N-formimidoyl-L-glutamate from L-histidine: step 1/3. This is Histidine ammonia-lyase from Bradyrhizobium diazoefficiens (strain JCM 10833 / BCRC 13528 / IAM 13628 / NBRC 14792 / USDA 110).